Consider the following 249-residue polypeptide: DNA repair protein RecO (249 aa).

The protein belongs to the RecO family.

In terms of biological role, involved in DNA repair and RecF pathway recombination. The chain is DNA repair protein RecO from Mycoplasma capricolum subsp. capricolum (strain California kid / ATCC 27343 / NCTC 10154).